A 266-amino-acid polypeptide reads, in one-letter code: Undecaprenyl-diphosphatase 3 (266 aa).

The next 8 helical transmembrane spans lie at 4 to 24 (IEAFKALFLGFIEGLTEFLPI), 43 to 63 (SGRAFEVVIQLGAILAVCWLY), 86 to 106 (FSVLMAFFPAVIIGVLAVDFI), 109 to 129 (VLFSPLVVAIALIIGGLIIFW), 145 to 165 (ITFKQAIAVGFIQCLAMIPGT), 186 to 206 (TEFSFFLAMPTMLGAATYDLL), 219 to 239 (NIGLGFITAFISALFVVKALV), and 246 to 266 (TLRVFAWYRIVLGIIIMFVML).

Belongs to the UppP family.

It localises to the cell inner membrane. The enzyme catalyses di-trans,octa-cis-undecaprenyl diphosphate + H2O = di-trans,octa-cis-undecaprenyl phosphate + phosphate + H(+). Its function is as follows. Catalyzes the dephosphorylation of undecaprenyl diphosphate (UPP). Confers resistance to bacitracin. The chain is Undecaprenyl-diphosphatase 3 from Acinetobacter baylyi (strain ATCC 33305 / BD413 / ADP1).